The sequence spans 403 residues: Acetate kinase (403 aa).

N9 is a binding site for Mg(2+). Residue K16 participates in ATP binding. R93 is a substrate binding site. Residue D150 is the Proton donor/acceptor of the active site. Residues 210 to 214 (HLGNG), 284 to 286 (DFR), and 332 to 336 (GVGEN) each bind ATP. E388 lines the Mg(2+) pocket.

This sequence belongs to the acetokinase family. As to quaternary structure, homodimer. It depends on Mg(2+) as a cofactor. Requires Mn(2+) as cofactor.

Its subcellular location is the cytoplasm. It catalyses the reaction acetate + ATP = acetyl phosphate + ADP. It functions in the pathway metabolic intermediate biosynthesis; acetyl-CoA biosynthesis; acetyl-CoA from acetate: step 1/2. Functionally, catalyzes the formation of acetyl phosphate from acetate and ATP. Can also catalyze the reverse reaction. The polypeptide is Acetate kinase (Corynebacterium jeikeium (strain K411)).